The following is a 436-amino-acid chain: Diaminobutyrate--2-oxoglutarate transaminase (436 aa).

N6-(pyridoxal phosphate)lysine is present on lysine 269.

The protein belongs to the class-III pyridoxal-phosphate-dependent aminotransferase family. It depends on pyridoxal 5'-phosphate as a cofactor.

It catalyses the reaction L-2,4-diaminobutanoate + 2-oxoglutarate = L-aspartate 4-semialdehyde + L-glutamate. The protein operates within amine and polyamine biosynthesis; ectoine biosynthesis; L-ectoine from L-aspartate 4-semialdehyde: step 1/3. Its function is as follows. Catalyzes reversively the conversion of L-aspartate beta-semialdehyde (ASA) to L-2,4-diaminobutyrate (DABA) by transamination with L-glutamate. The protein is Diaminobutyrate--2-oxoglutarate transaminase (ectB) of Nocardia farcinica (strain IFM 10152).